The sequence spans 419 residues: Erythromycin esterase type II (419 aa).

In terms of biological role, this enzyme confers resistance to erythromycin through inactivation by hydrolyzing the lactone ring of the antibiotic. This is Erythromycin esterase type II (ereB) from Escherichia coli.